A 263-amino-acid polypeptide reads, in one-letter code: Ribosomal RNA small subunit methyltransferase J (263 aa).

S-adenosyl-L-methionine-binding positions include 115–116 (RD), 131–132 (ER), and Asp-181.

Belongs to the methyltransferase superfamily. RsmJ family.

The protein localises to the cytoplasm. The enzyme catalyses guanosine(1516) in 16S rRNA + S-adenosyl-L-methionine = N(2)-methylguanosine(1516) in 16S rRNA + S-adenosyl-L-homocysteine + H(+). Functionally, specifically methylates the guanosine in position 1516 of 16S rRNA. The polypeptide is Ribosomal RNA small subunit methyltransferase J (Hahella chejuensis (strain KCTC 2396)).